A 105-amino-acid polypeptide reads, in one-letter code: Heat shock protein HspQ (105 aa).

The protein belongs to the HspQ family.

It is found in the cytoplasm. Involved in the degradation of certain denaturated proteins, including DnaA, during heat shock stress. The sequence is that of Heat shock protein HspQ from Escherichia fergusonii (strain ATCC 35469 / DSM 13698 / CCUG 18766 / IAM 14443 / JCM 21226 / LMG 7866 / NBRC 102419 / NCTC 12128 / CDC 0568-73).